The primary structure comprises 138 residues: Transcription antitermination protein NusB (138 aa).

The protein belongs to the NusB family.

Its function is as follows. Involved in transcription antitermination. Required for transcription of ribosomal RNA (rRNA) genes. Binds specifically to the boxA antiterminator sequence of the ribosomal RNA (rrn) operons. The protein is Transcription antitermination protein NusB of Helicobacter pylori (strain J99 / ATCC 700824) (Campylobacter pylori J99).